The following is a 407-amino-acid chain: Argininosuccinate synthase (407 aa).

ATP contacts are provided by residues 13-21 and Ala40; that span reads AYSGGLDTS. L-citrulline contacts are provided by Tyr91 and Ser96. An ATP-binding site is contributed by Gly121. L-aspartate contacts are provided by Thr123, Asn127, and Asp128. Asn127 is an L-citrulline binding site. L-citrulline is bound by residues Arg131, Ser182, Ser191, Glu267, and Tyr279.

This sequence belongs to the argininosuccinate synthase family. Type 1 subfamily. In terms of assembly, homotetramer.

It is found in the cytoplasm. The catalysed reaction is L-citrulline + L-aspartate + ATP = 2-(N(omega)-L-arginino)succinate + AMP + diphosphate + H(+). The protein operates within amino-acid biosynthesis; L-arginine biosynthesis; L-arginine from L-ornithine and carbamoyl phosphate: step 2/3. The chain is Argininosuccinate synthase from Agrobacterium fabrum (strain C58 / ATCC 33970) (Agrobacterium tumefaciens (strain C58)).